Consider the following 408-residue polypeptide: Innexin-12 (408 aa).

Residues 29 to 49 form a helical membrane-spanning segment; sequence TIGLVLASAFITGWSFVGSPI. N-linked (GlcNAc...) asparagine glycosylation is present at Asn-99. 3 helical membrane passes run 113–133, 197–217, and 284–304; these read QWVP…VVIW, VITS…FQFV, and IFVA…TNTI.

The protein belongs to the pannexin family.

The protein resides in the cell membrane. The protein localises to the cell junction. It is found in the gap junction. In terms of biological role, structural component of the gap junctions. Plays a role in oocyte directional transit in the spermatheca during ovulation by facilitating the directional propagation of the calcium signal in the spermatheca. Plays a role in male tail tip morphogenesis. This is Innexin-12 from Caenorhabditis elegans.